The following is a 190-amino-acid chain: uncharacterized protein (190 aa).

To E.coli YdjR.

This is an uncharacterized protein from Pseudomonas putida (Arthrobacter siderocapsulatus).